A 609-amino-acid chain; its full sequence is DNA mismatch repair protein MutL (609 aa).

A disordered region spans residues 364-386 (SVNSKPTDYRPAMSPSFKSTPNT).

This sequence belongs to the DNA mismatch repair MutL/HexB family.

Functionally, this protein is involved in the repair of mismatches in DNA. It is required for dam-dependent methyl-directed DNA mismatch repair. May act as a 'molecular matchmaker', a protein that promotes the formation of a stable complex between two or more DNA-binding proteins in an ATP-dependent manner without itself being part of a final effector complex. This is DNA mismatch repair protein MutL from Rickettsia akari (strain Hartford).